Here is a 307-residue protein sequence, read N- to C-terminus: Haloalkane dehalogenase (307 aa).

In terms of domain architecture, AB hydrolase-1 spans 34–158 (PVLFLHGNPT…FQAFRTADVG (125 aa)). The Nucleophile role is filled by aspartate 106. Glutamate 130 acts as the Proton donor in catalysis. Histidine 272 serves as the catalytic Proton acceptor.

This sequence belongs to the haloalkane dehalogenase family. Type 2 subfamily. In terms of assembly, monomer.

It carries out the reaction 1-haloalkane + H2O = a halide anion + a primary alcohol + H(+). The protein operates within xenobiotic degradation; 1,2-dibromoethane degradation. Functionally, catalyzes hydrolytic cleavage of carbon-halogen bonds in halogenated aliphatic compounds, leading to the formation of the corresponding primary alcohols, halide ions and protons. Has a broad substrate specificity, which includes mono- and di-chlorinated and brominated alkanes. The highest activity was found with 1,2-dibromoethane, whereas low activity was measured with the analog 1,2-dichloroethane. In Mycobacterium sp. (strain GP1), this protein is Haloalkane dehalogenase (dhaAF).